The primary structure comprises 125 residues: Ribosome-binding factor A (125 aa).

This sequence belongs to the RbfA family. Monomer. Binds 30S ribosomal subunits, but not 50S ribosomal subunits or 70S ribosomes.

It is found in the cytoplasm. One of several proteins that assist in the late maturation steps of the functional core of the 30S ribosomal subunit. Associates with free 30S ribosomal subunits (but not with 30S subunits that are part of 70S ribosomes or polysomes). Required for efficient processing of 16S rRNA. May interact with the 5'-terminal helix region of 16S rRNA. This chain is Ribosome-binding factor A, found in Xylella fastidiosa (strain 9a5c).